The following is a 611-amino-acid chain: Procollagen galactosyltransferase 1-A (611 aa).

The first 24 residues, 1 to 24, serve as a signal peptide directing secretion; the sequence is MSQAGVDRLLRGLQLLLLVLRLSA. N-linked (GlcNAc...) asparagine glycosylation is found at N85, N173, N312, N370, and N568. Over residues 575–591 the composition is skewed to basic and acidic residues; sequence WDRAKSRKTQQQEKLRS. The disordered stretch occupies residues 575–611; sequence WDRAKSRKTQQQEKLRSEALNSPSLGSPFDNTARDEL. The Prevents secretion from ER motif lies at 608–611; it reads RDEL.

The protein belongs to the glycosyltransferase 25 family.

The protein localises to the endoplasmic reticulum lumen. The catalysed reaction is (5R)-5-hydroxy-L-lysyl-[collagen] + UDP-alpha-D-galactose = (5R)-5-O-(beta-D-galactosyl)-5-hydroxy-L-lysyl-[collagen] + UDP + H(+). Functionally, beta-galactosyltransferase that transfers beta-galactose to hydroxylysine residues of type I collagen. By acting on collagen glycosylation, facilitates the formation of collagen triple helix. The sequence is that of Procollagen galactosyltransferase 1-A (colgalt1-a) from Xenopus laevis (African clawed frog).